A 449-amino-acid polypeptide reads, in one-letter code: Delta(8)-fatty-acid desaturase 2 (449 aa).

Residues 7–91 (KRYVTSEDLK…VRDHHVSDVS (85 aa)) form the Cytochrome b5 heme-binding domain. Residues H42 and H65 each coordinate heme. The next 2 membrane-spanning stretches (helical) occupy residues 113–133 (VTLY…YGVL) and 138–158 (IWAH…SAYV). Residues 160 to 164 (HDSGH) carry the Histidine box-1 motif. Residues 176–196 (LIQLLSGNCLTGISIAWWKWT) traverse the membrane as a helical segment. The Histidine box-2 motif lies at 197–201 (HNAHH). A run of 3 helical transmembrane segments spans residues 255–275 (FYPV…LLLF), 284–304 (ALNI…VSFL), and 311–331 (FIFV…FCLN). A Histidine box-3 motif is present at residues 374–378 (QLEHH).

Belongs to the fatty acid desaturase type 1 family. It depends on Fe cation as a cofactor. Highly expressed in flowers and siliques. Expressed at low levels in roots, leaves and stems.

It localises to the endoplasmic reticulum membrane. The catalysed reaction is an N-acyl-(4R)-4-hydroxysphinganine + 2 Fe(II)-[cytochrome b5] + O2 + 2 H(+) = a (4R,8E)-4-hydroxysphingenine ceramide + 2 Fe(III)-[cytochrome b5] + 2 H2O. It carries out the reaction an N-acyl-(4R)-4-hydroxysphinganine + 2 Fe(II)-[cytochrome b5] + O2 + 2 H(+) = a (4R,8Z)-4-hydroxysphing-8-enine ceramide + 2 Fe(III)-[cytochrome b5] + 2 H2O. In terms of biological role, plays a major role as delta(8)-fatty-acid desaturase which introduces a double bond at the 8-position in the long-chain base (LCB) of ceramides with or without a hydroxy group at the 4-position. The enzyme produces both the 8E and 8Z isomers (in a 4:1 ratio). This structural modification contributes to the quantitative partitioning of ceramides between the two major sphingolipid classes, glucosylceramides and glycosylinositolphosphoryl ceramides. Sphingolipids are important membrane components involved in environmental stress responses, such as resistance to chilling, and act as cell signaling molecules. In Arabidopsis thaliana (Mouse-ear cress), this protein is Delta(8)-fatty-acid desaturase 2 (SLD2).